A 178-amino-acid chain; its full sequence is Histone deacetylase complex subunit SAP30L (178 aa).

Intrachain disulfides connect Cys-24–Cys-25 and Cys-33–Cys-69. Residues Cys-24–His-72 form an Atypical zinc finger. A disordered region spans residues Arg-80–Val-99. Positions Asn-81 to Lys-86 match the Nuclear localization signal (NLS) motif. The segment at Arg-83–Arg-85 is important for DNA and phosphoinositide binding.

The protein belongs to the SAP30 family. In terms of assembly, interacts with components of the histone deacetylase complex sin3a, hdac1 and hdac2. Binds histones and nucleosomes. As to expression, detected in embryos at 2dpf (at protein level). Widely expressed during embryogenesis and in adults.

It localises to the nucleus. The protein localises to the nucleolus. Functions as a transcription repressor, probably via its interaction with histone deacetylase complexes. Required for normal expression of numerous target genes. Involved in the functional recruitment of the class 1 Sin3-histone deacetylase complex (HDAC) to the nucleolus. Binds DNA, apparently without sequence-specificity, and bends bound double-stranded DNA. Binds phosphoinositol phosphates (phosphoinositol 3-phosphate, phosphoinositol 4-phosphate and phosphoinositol 5-phosphate) via the same basic sequence motif that mediates DNA binding and nuclear import. In Danio rerio (Zebrafish), this protein is Histone deacetylase complex subunit SAP30L (sap30l).